A 95-amino-acid polypeptide reads, in one-letter code: UPF0235 protein MS0322 (95 aa).

The protein belongs to the UPF0235 family.

This Mannheimia succiniciproducens (strain KCTC 0769BP / MBEL55E) protein is UPF0235 protein MS0322.